The chain runs to 706 residues: Polycomb protein SCMH1 (706 aa).

MBT repeat units follow at residues 28-126 and 134-235; these read FTWD…LQPP and SSWP…LQPP. Disordered stretches follow at residues 233–350 and 576–595; these read QPPG…TVPS and GSDR…RDPS. 2 stretches are compositionally biased toward basic residues: residues 272 to 283 and 304 to 319; these read RGRKPGKKRGRT and FPKK…RKPR. Low complexity predominate over residues 329–340; sequence PTTSTPEPDTST. A compositionally biased stretch (basic and acidic residues) spans 576-591; it reads GSDRHLESRDPPRLSG. Residues 597-662 enclose the SAM domain; the sequence is WTVEDVMQFV…SFHIDRLKQV (66 aa).

It belongs to the SCM family. As to quaternary structure, associates with a PRC1-like complex. Interacts with the SAM domain of PHC1 via its SAM domain in vitro. As to expression, most abundant in testis. Moderate levels detected in heart, brain, lung, liver, skeletal muscle and kidney and lower levels in spleen.

The protein resides in the nucleus. In terms of biological role, associates with Polycomb group (PcG) multiprotein complexes; the complex class is required to maintain the transcriptionally repressive state of some genes. This is Polycomb protein SCMH1 from Mus musculus (Mouse).